The sequence spans 1026 residues: Lon protease homolog, mitochondrial (1026 aa).

A mitochondrion-targeting transit peptide spans 1 to 29; that stretch reads MLGTRVTRAVYTRAPLKLQLRALGLHRRY. Disordered regions lie at residues 29–55 and 185–206; these read YVHN…DKKL and ASEE…DKVS. The Lon N-terminal domain occupies 62–345; that stretch reads MLALPISRRP…KSLLVLKKEL (284 aa). Positions 185-194 are enriched in acidic residues; it reads ASEETKDEET. Residues 195 to 206 are compositionally biased toward basic and acidic residues; it reads VDKTESATDKVS. Residue 497–504 coordinates ATP; sequence GPPGVGKT. The tract at residues 711-785 is disordered; it reads TEPLVSTSEE…EEEEDTSMIV (75 aa). Residues 714–737 are compositionally biased toward polar residues; that stretch reads LVSTSEEPQLSQTNQNISSSSAED. The Lon proteolytic domain occupies 815–1001; the sequence is TTPPGVIMGL…DDIYKRLFSG (187 aa). Active-site residues include Ser907 and Lys950.

The protein belongs to the peptidase S16 family. In terms of assembly, homohexamer or homoheptamer. Organized in a ring with a central cavity.

It is found in the mitochondrion matrix. The catalysed reaction is Hydrolysis of proteins in presence of ATP.. ATP-dependent serine protease that mediates the selective degradation of misfolded, unassembled or oxidatively damaged polypeptides as well as certain short-lived regulatory proteins in the mitochondrial matrix. May also have a chaperone function in the assembly of inner membrane protein complexes. Participates in the regulation of mitochondrial gene expression and in the maintenance of the integrity of the mitochondrial genome. Binds to mitochondrial DNA in a site-specific manner. The protein is Lon protease homolog, mitochondrial of Candida glabrata (strain ATCC 2001 / BCRC 20586 / JCM 3761 / NBRC 0622 / NRRL Y-65 / CBS 138) (Yeast).